The following is a 105-amino-acid chain: Large ribosomal subunit protein uL24 (105 aa).

This sequence belongs to the universal ribosomal protein uL24 family. As to quaternary structure, part of the 50S ribosomal subunit.

Its function is as follows. One of two assembly initiator proteins, it binds directly to the 5'-end of the 23S rRNA, where it nucleates assembly of the 50S subunit. One of the proteins that surrounds the polypeptide exit tunnel on the outside of the subunit. This is Large ribosomal subunit protein uL24 from Wolbachia sp. subsp. Brugia malayi (strain TRS).